The chain runs to 362 residues: Probable dual-specificity RNA methyltransferase RlmN (362 aa).

E105 serves as the catalytic Proton acceptor. The Radical SAM core domain occupies 111–344; the sequence is HEYGNSICVT…VTIRREQGHD (234 aa). Residues C118 and C349 are joined by a disulfide bond. [4Fe-4S] cluster is bound by residues C125, C129, and C132. S-adenosyl-L-methionine-binding positions include 175–176, S207, 230–232, and N306; these read GE and SLH. The S-methylcysteine intermediate role is filled by C349.

Belongs to the radical SAM superfamily. RlmN family. [4Fe-4S] cluster serves as cofactor.

The protein resides in the cytoplasm. The catalysed reaction is adenosine(2503) in 23S rRNA + 2 reduced [2Fe-2S]-[ferredoxin] + 2 S-adenosyl-L-methionine = 2-methyladenosine(2503) in 23S rRNA + 5'-deoxyadenosine + L-methionine + 2 oxidized [2Fe-2S]-[ferredoxin] + S-adenosyl-L-homocysteine. It carries out the reaction adenosine(37) in tRNA + 2 reduced [2Fe-2S]-[ferredoxin] + 2 S-adenosyl-L-methionine = 2-methyladenosine(37) in tRNA + 5'-deoxyadenosine + L-methionine + 2 oxidized [2Fe-2S]-[ferredoxin] + S-adenosyl-L-homocysteine. Specifically methylates position 2 of adenine 2503 in 23S rRNA and position 2 of adenine 37 in tRNAs. The sequence is that of Probable dual-specificity RNA methyltransferase RlmN from Bacillus anthracis (strain CDC 684 / NRRL 3495).